The primary structure comprises 1687 residues: Muscle calcium channel subunit alpha-1 (1687 aa).

The interval 1–33 (MDDAVCPTETDNVQNKQKATTPKRTQRRGGKQQ) is disordered. Residues 1-61 (MDDAVCPTET…IFCIKIVDSK (61 aa)) are Cytoplasmic-facing. The span at 9 to 23 (ETDNVQNKQKATTPK) shows a compositional bias: polar residues. The stretch at 48–330 (NPLRIFCIKI…LILGVLSGEF (283 aa)) is one I repeat. Residues 62-80 (LFEYFILLTIFANCVALAV) traverse the membrane as a helical segment. Residues 81–99 (YTPYPSGDSNITNQMLEKI) are Extracellular-facing. N-linked (GlcNAc...) asparagine glycosylation is present at asparagine 90. The chain crosses the membrane as a helical span at residues 100-117 (EYIFLVIFTSECVMKIIA). The Cytoplasmic segment spans residues 118-130 (YGFVLHTGSYLRN). A helical transmembrane segment spans residues 131 to 145 (GWNFLDFFIVVIGMI). At 146–157 (STALSNLVKEGF) the chain is on the extracellular side. A helical transmembrane segment spans residues 158–176 (DVKALRAFRVLRPLRLVSG). Topologically, residues 177–196 (VPSLQVVLNSILKAMIPLLH) are cytoplasmic. The helical transmembrane segment at 197 to 216 (IALLVLFVIIIYAIIGLELF) threads the bilayer. Residues 217–302 (SGKLHKTCRH…SIQDAMGSSW (86 aa)) lie on the Extracellular side of the membrane. Glutamate 285 is a Ca(2+) binding site. The chain crosses the membrane as a helical span at residues 303–327 (EWIYFVSMVILGAFFVMNLILGVLS). Topologically, residues 328–434 (GEFSKERTKA…RACRKAVKSQ (107 aa)) are cytoplasmic. An II repeat occupies 420–667 (NRRIRRACRK…VFLAIAVDNL (248 aa)). Residues 435 to 454 (AFYWLIILLVFLNTGVLATE) traverse the membrane as a helical segment. At 455–467 (HYRQPIWLDQFQE) the chain is on the extracellular side. The helical transmembrane segment at 468–487 (YTNIFFIALFTCEMILKMYS) threads the bilayer. Over 488–496 (LGFQGYFVS) the chain is Cytoplasmic. Residues 497–515 (LFNRFDCFVVIGSISEMVL) form a helical membrane-spanning segment. The Extracellular portion of the chain corresponds to 516–525 (TSSELMAPLG). Residues 526–544 (VSVLRCVRLLRVFKVTKYW) traverse the membrane as a helical segment. At 545–563 (HSLSNLVASLLNSIQSIAS) the chain is on the cytoplasmic side. The helical transmembrane segment at 564 to 583 (LLLLLFLFIVIFGLLGMQVF) threads the bilayer. The Extracellular portion of the chain corresponds to 584–639 (GGRFTFKPEEEKPRSNFDSFYQSLLTVFQILTGEDWNVVMYDGIRAYGGVFSFGIV). Residue glutamate 617 coordinates Ca(2+). Residues 640-664 (ACIYYIILFICGNYILLNVFLAIAV) traverse the membrane as a helical segment. Topologically, residues 665–785 (DNLADADSLS…TNRFRIFCHR (121 aa)) are cytoplasmic. One copy of the III repeat lies at 777-1059 (NRFRIFCHRL…IFVGFVIVTF (283 aa)). A helical transmembrane segment spans residues 786-809 (LCNHSNFGNFILCCIMFSSAMLAA). At 810-826 (ENPLKADASRNIVLNKF) the chain is on the extracellular side. The chain crosses the membrane as a helical span at residues 827 to 846 (DYFFTAVFTIELVLKLISYG). The Cytoplasmic portion of the chain corresponds to 847–854 (FVLHDGAF). The chain crosses the membrane as a helical span at residues 855 to 877 (CRSAFNLLDLLVVCVSLISIFFN). Over 878 to 885 (SNAISVVK) the chain is Extracellular. Residues 886–900 (ILRVLRVLRPLRAIN) traverse the membrane as a helical segment. The Cytoplasmic portion of the chain corresponds to 901 to 921 (RAKGLKHVVQCVIVAVKTIGN). Residues 922 to 941 (IVLVTCLLQFMFAVIGVQLF) traverse the membrane as a helical segment. Topologically, residues 942 to 1030 (KGKFFSCSDG…NGGPIYNFRP (89 aa)) are extracellular. A dihydropyridine binding region spans residues 979-1068 (REWKNNKFHF…FQNEGEQEYK (90 aa)). Glutamate 1005 contributes to the Ca(2+) binding site. Residues 1031 to 1055 (IVAAYYIIYIIIIAFFMVNIFVGFV) traverse the membrane as a helical segment. Residues 1056 to 1110 (IVTFQNEGEQEYKNCELDKNQRNCIEFALKAKPVRRYIPKHSIQYKVWWFVTSSS) lie on the Cytoplasmic side of the membrane. Residues 1096–1370 (HSIQYKVWWF…LFVAVIMDNF (275 aa)) form an IV repeat. The chain crosses the membrane as a helical span at residues 1111–1129 (FEYSIFVLIMINTVTLAMK). Residues 1130 to 1143 (FYKQPEYYSEILDA) lie on the Extracellular side of the membrane. Residues 1144–1163 (LNMIFTAVFSLEFIFKLAAF) traverse the membrane as a helical segment. The Cytoplasmic segment spans residues 1164–1172 (RFKNYFGDA). Residues 1173–1191 (WNTFDFIIVLGSFIDIVYS) traverse the membrane as a helical segment. The Extracellular portion of the chain corresponds to 1192–1219 (EIKTKEQALATCDGQSCNKAKGGSTLIS). A helical transmembrane segment spans residues 1220 to 1238 (INFFRLFRVMRLVKLLSKG). The Cytoplasmic segment spans residues 1239–1257 (EGIRTLLWTFIKSFQALPY). The chain crosses the membrane as a helical span at residues 1258–1277 (VALLIVMLFFIYAVIGMQVF). At 1278–1343 (GKIMLEEGTS…AVNNCGSSIA (66 aa)) the chain is on the extracellular side. The segment at 1327–1389 (KCDPESDAVN…LGPHHLDEFI (63 aa)) is dihydropyridine binding. Residues 1337–1378 (NCGSSIAFPYFISFYVLCSFLIINLFVAVIMDNFDYLTRDWS) form a phenylalkylamine binding region. A helical transmembrane segment spans residues 1344 to 1362 (FPYFISFYVLCSFLIINLF). The Cytoplasmic segment spans residues 1363–1687 (VAVIMDNFDY…PKSKDKDEEF (325 aa)).

It belongs to the calcium channel alpha-1 subunit (TC 1.A.1.11) family. In terms of tissue distribution, predominantly expressed in the larval body wall musculature. In adults, highest expression in thorax followed by head and at a lower extent by abdomen.

The protein localises to the membrane. Its function is as follows. Voltage-sensitive calcium channels (VSCC) mediate the entry of calcium ions into excitable cells and are also involved in a variety of calcium-dependent processes, including muscle contraction, hormone or neurotransmitter release, gene expression, cell motility, cell division and cell death. MDL-alpha1 encodes a dihydropyridine- and diltiazem-sensitive current in larval body wall muscle. The polypeptide is Muscle calcium channel subunit alpha-1 (Musca domestica (House fly)).